We begin with the raw amino-acid sequence, 416 residues long: Gamma-glutamyl phosphate reductase (416 aa).

The protein belongs to the gamma-glutamyl phosphate reductase family.

It is found in the cytoplasm. It catalyses the reaction L-glutamate 5-semialdehyde + phosphate + NADP(+) = L-glutamyl 5-phosphate + NADPH + H(+). Its pathway is amino-acid biosynthesis; L-proline biosynthesis; L-glutamate 5-semialdehyde from L-glutamate: step 2/2. Catalyzes the NADPH-dependent reduction of L-glutamate 5-phosphate into L-glutamate 5-semialdehyde and phosphate. The product spontaneously undergoes cyclization to form 1-pyrroline-5-carboxylate. The polypeptide is Gamma-glutamyl phosphate reductase (Streptococcus equi subsp. zooepidemicus (strain MGCS10565)).